We begin with the raw amino-acid sequence, 407 residues long: Phosphopentomutase (407 aa).

The Mn(2+) site is built by Asp10, Asp306, His311, Asp347, His348, and His359.

The protein belongs to the phosphopentomutase family. Mn(2+) is required as a cofactor.

Its subcellular location is the cytoplasm. The catalysed reaction is 2-deoxy-alpha-D-ribose 1-phosphate = 2-deoxy-D-ribose 5-phosphate. It catalyses the reaction alpha-D-ribose 1-phosphate = D-ribose 5-phosphate. Its pathway is carbohydrate degradation; 2-deoxy-D-ribose 1-phosphate degradation; D-glyceraldehyde 3-phosphate and acetaldehyde from 2-deoxy-alpha-D-ribose 1-phosphate: step 1/2. In terms of biological role, isomerase that catalyzes the conversion of deoxy-ribose 1-phosphate (dRib-1-P) and ribose 1-phosphate (Rib-1-P) to deoxy-ribose 5-phosphate (dRib-5-P) and ribose 5-phosphate (Rib-5-P), respectively. This is Phosphopentomutase from Shigella boydii serotype 18 (strain CDC 3083-94 / BS512).